We begin with the raw amino-acid sequence, 188 residues long: MKKIGVLALQGAVDEHIQMIESAGALAFKVKHSNDLAGLDGLVLPGGESTTMRKIMKRYDLMEPVKAFAKEGKAIFGTCAGLVLLSKEIEGGEESLGLLEATAIRNGFGRQKESFEAELTVEVFDDSPFEAVFIRAPYLIEPSDEVSVLATVENRIVAAKQANILVTAFHPELTNDNRLMKYFLEKMV.

L-glutamine is bound at residue 47-49; it reads GES. C79 serves as the catalytic Nucleophile. L-glutamine contacts are provided by residues R105 and 134–135; that span reads IR. Residues H170 and E172 each act as charge relay system in the active site.

It belongs to the glutaminase PdxT/SNO family. In the presence of PdxS, forms a dodecamer of heterodimers. Only shows activity in the heterodimer.

The enzyme catalyses aldehydo-D-ribose 5-phosphate + D-glyceraldehyde 3-phosphate + L-glutamine = pyridoxal 5'-phosphate + L-glutamate + phosphate + 3 H2O + H(+). It catalyses the reaction L-glutamine + H2O = L-glutamate + NH4(+). It participates in cofactor biosynthesis; pyridoxal 5'-phosphate biosynthesis. Functionally, catalyzes the hydrolysis of glutamine to glutamate and ammonia as part of the biosynthesis of pyridoxal 5'-phosphate. The resulting ammonia molecule is channeled to the active site of PdxS. This Listeria innocua serovar 6a (strain ATCC BAA-680 / CLIP 11262) protein is Pyridoxal 5'-phosphate synthase subunit PdxT.